The primary structure comprises 447 residues: Dihydroorotase (447 aa).

His-81 and His-83 together coordinate Zn(2+). Residues His-83 to Arg-85 and Asn-115 contribute to the substrate site. Zn(2+) is bound by residues Asp-171, His-198, and His-252. Asn-298 lines the substrate pocket. Asp-325 serves as a coordination point for Zn(2+). Residue Asp-325 is part of the active site. Residues His-329 and Phe-343–Gly-344 each bind substrate.

It belongs to the metallo-dependent hydrolases superfamily. DHOase family. Class I DHOase subfamily. Requires Zn(2+) as cofactor.

It carries out the reaction (S)-dihydroorotate + H2O = N-carbamoyl-L-aspartate + H(+). Its pathway is pyrimidine metabolism; UMP biosynthesis via de novo pathway; (S)-dihydroorotate from bicarbonate: step 3/3. Catalyzes the reversible cyclization of carbamoyl aspartate to dihydroorotate. This is Dihydroorotase from Ehrlichia chaffeensis (strain ATCC CRL-10679 / Arkansas).